A 455-amino-acid chain; its full sequence is Probable carboxypeptidase MCYG_07204 (455 aa).

The signal sequence occupies residues M1 to A21. An N-linked (GlcNAc...) asparagine glycan is attached at N93. Position 170 (D170) interacts with Zn(2+). E202 functions as the Proton acceptor in the catalytic mechanism. A Zn(2+)-binding site is contributed by E203. N-linked (GlcNAc...) asparagine glycosylation is present at N390.

Belongs to the peptidase M20A family. Zn(2+) serves as cofactor.

It is found in the secreted. The polypeptide is Probable carboxypeptidase MCYG_07204 (Arthroderma otae (strain ATCC MYA-4605 / CBS 113480) (Microsporum canis)).